The sequence spans 258 residues: UPF0246 protein ACIAD2218 (258 aa).

Belongs to the UPF0246 family.

The sequence is that of UPF0246 protein ACIAD2218 from Acinetobacter baylyi (strain ATCC 33305 / BD413 / ADP1).